A 27-amino-acid polypeptide reads, in one-letter code: Pregnancy-associated glycoprotein 62 (27 aa).

It belongs to the peptidase A1 family. In terms of processing, glycosylated. In terms of tissue distribution, placenta.

The sequence is that of Pregnancy-associated glycoprotein 62 (PAG62) from Capra hircus (Goat).